The sequence spans 400 residues: Phosphoglycerate kinase (400 aa).

Substrate-binding positions include 23-25 (DLN), R38, 61-64 (HFGR), R120, and R153. Residues K203, E325, and 355–358 (GGDT) each bind ATP.

The protein belongs to the phosphoglycerate kinase family. As to quaternary structure, monomer.

It is found in the cytoplasm. The enzyme catalyses (2R)-3-phosphoglycerate + ATP = (2R)-3-phospho-glyceroyl phosphate + ADP. It participates in carbohydrate degradation; glycolysis; pyruvate from D-glyceraldehyde 3-phosphate: step 2/5. The sequence is that of Phosphoglycerate kinase from Allorhizobium ampelinum (strain ATCC BAA-846 / DSM 112012 / S4) (Agrobacterium vitis (strain S4)).